A 263-amino-acid chain; its full sequence is Trans-aconitate 2-methyltransferase (263 aa).

This sequence belongs to the methyltransferase superfamily. Tam family.

It localises to the cytoplasm. It catalyses the reaction trans-aconitate + S-adenosyl-L-methionine = (E)-3-(methoxycarbonyl)pent-2-enedioate + S-adenosyl-L-homocysteine. Its function is as follows. Catalyzes the S-adenosylmethionine monomethyl esterification of trans-aconitate. In Mycobacterium marinum (strain ATCC BAA-535 / M), this protein is Trans-aconitate 2-methyltransferase.